The chain runs to 1429 residues: Nitric oxide synthase 1 (1429 aa).

Positions 1-200 (MEENTFGVQQ…LQDIGEHDEL (200 aa)) are interaction with NOSIP. Residues 17-99 (SVRLFKRKVG…ETHVVLILRG (83 aa)) form the PDZ domain. Disordered regions lie at residues 152–174 (VTGL…SVSQ), 214–255 (GSKA…DNDR), and 271–298 (NNPY…SRCP). Residues 160 to 174 (QHAQGHGQGAGSVSQ) show a composition bias toward low complexity. Residues 163-240 (QGHGQGAGSV…TGIQVDRDLD (78 aa)) form an interaction with DYNLL1/PIN region. Positions 226 to 243 (AEMKDTGIQVDRDLDGKS) are enriched in basic and acidic residues. S280 carries the post-translational modification Phosphoserine. Positions 280 to 294 (SPTSGKQSPTKNGSP) are enriched in polar residues. S334 lines the (6R)-L-erythro-5,6,7,8-tetrahydrobiopterin pocket. C415 serves as a coordination point for heme b. Residues Q478, W587, Y588, and E592 each coordinate L-arginine. The (6R)-L-erythro-5,6,7,8-tetrahydrobiopterin site is built by V677, W678, and F691. Position 706 (Y706) interacts with heme b. The segment at 725–745 (KRRAIGFKKLAEAVKFSAKLM) is calmodulin-binding. One can recognise a Flavodoxin-like domain in the interval 755-935 (ATILYATETG…AFRTWAKKVF (181 aa)). FMN contacts are provided by T761, E762, T763, K765, S766, S807, T808, and G812. Phosphoserine is present on residues S847, S857, and S858. 5 residues coordinate FMN: S886, H891, C893, E919, and Q923. The region spanning 990 to 1237 (KRVSAARLLS…VRGAPSFHLP (248 aa)) is the FAD-binding FR-type domain. R1010 contacts NADP(+). FAD contacts are provided by H1032, R1173, Y1174, Y1175, S1176, T1191, and A1193. S1196 is a binding site for NADP(+). The FAD site is built by Y1197, V1210, C1211, and S1212. T1251, R1284, S1313, R1314, K1320, Y1322, Q1324, D1357, T1398, and R1400 together coordinate NADP(+).

This sequence belongs to the NOS family. As to quaternary structure, homodimer. Interacts with DLG4 (via N-terminal tandem pair of PDZ domains); the interaction possibly being prevented by the association between NOS1 and CAPON. Forms a ternary complex with CAPON and RASD1. Forms a ternary complex with CAPON and SYN1. Interacts with ZDHHC23. Interacts with NOSIP; which may impair its synaptic location. Interacts with HTR4. Interacts with SLC6A4. Interacts with VAC14. Forms a complex with ASL, ASS1 and SLC7A1; the complex regulates cell-autonomous L-arginine synthesis and citrulline recycling while channeling extracellular L-arginine to nitric oxide synthesis pathway. Interacts with DMD; localizes NOS1 to sarcolemma in muscle cells. Interacts with DYNLL1; inhibits the nitric oxide synthase activity. It depends on heme b as a cofactor. The cofactor is FAD. FMN serves as cofactor. Requires (6R)-L-erythro-5,6,7,8-tetrahydrobiopterin as cofactor. In terms of processing, ubiquitinated; mediated by STUB1/CHIP in the presence of Hsp70 and Hsp40 (in vitro). In terms of tissue distribution, isoform N-NOS-1 is expressed in brain and colorectum. Found in the Auerbach's plexus of the enteric nervous system. Isoform PNNOS is expressed in the penis, urethra, prostate, and skeletal muscle, and coexists with the cerebellar nnos in the pelvic plexus, bladder and liver, and is detectable in the cerebellum.

Its subcellular location is the cell membrane. It is found in the sarcolemma. The protein resides in the cell projection. The protein localises to the dendritic spine. The catalysed reaction is 2 L-arginine + 3 NADPH + 4 O2 + H(+) = 2 L-citrulline + 2 nitric oxide + 3 NADP(+) + 4 H2O. With respect to regulation, stimulated by calcium/calmodulin. Inhibited by DYNLL1 that prevents the dimerization of the protein. Inhibited by NOSIP. In terms of biological role, produces nitric oxide (NO) which is a messenger molecule with diverse functions throughout the body. In the brain and peripheral nervous system, NO displays many properties of a neurotransmitter. Inhibitory transmitter for non-adrenergic and non-cholinergic nerves in the colorectum. Probably has nitrosylase activity and mediates cysteine S-nitrosylation of cytoplasmic target proteins such SRR. Inhibitory transmitter for non-adrenergic and non-cholinergic nerves in the colorectum. This is Nitric oxide synthase 1 from Rattus norvegicus (Rat).